The primary structure comprises 267 residues: 4-hydroxy-tetrahydrodipicolinate reductase (267 aa).

Residues glycine 9–methionine 14 and aspartate 35 each bind NAD(+). An NADP(+)-binding site is contributed by arginine 36. Residues glycine 98–threonine 100 and alanine 122–phenylalanine 125 each bind NAD(+). Catalysis depends on histidine 155, which acts as the Proton donor/acceptor. Histidine 156 lines the (S)-2,3,4,5-tetrahydrodipicolinate pocket. The active-site Proton donor is the lysine 159. Glycine 165–threonine 166 contacts (S)-2,3,4,5-tetrahydrodipicolinate.

It belongs to the DapB family.

The protein localises to the cytoplasm. It catalyses the reaction (S)-2,3,4,5-tetrahydrodipicolinate + NAD(+) + H2O = (2S,4S)-4-hydroxy-2,3,4,5-tetrahydrodipicolinate + NADH + H(+). The enzyme catalyses (S)-2,3,4,5-tetrahydrodipicolinate + NADP(+) + H2O = (2S,4S)-4-hydroxy-2,3,4,5-tetrahydrodipicolinate + NADPH + H(+). It participates in amino-acid biosynthesis; L-lysine biosynthesis via DAP pathway; (S)-tetrahydrodipicolinate from L-aspartate: step 4/4. In terms of biological role, catalyzes the conversion of 4-hydroxy-tetrahydrodipicolinate (HTPA) to tetrahydrodipicolinate. This Chromobacterium violaceum (strain ATCC 12472 / DSM 30191 / JCM 1249 / CCUG 213 / NBRC 12614 / NCIMB 9131 / NCTC 9757 / MK) protein is 4-hydroxy-tetrahydrodipicolinate reductase.